The sequence spans 783 residues: Endonuclease MutS2 (783 aa).

Residue 337-344 (GPNTGGKT) participates in ATP binding. Positions 708 to 783 (LHLRGYRYEE…GFGVTVAELK (76 aa)) constitute a Smr domain.

This sequence belongs to the DNA mismatch repair MutS family. MutS2 subfamily. In terms of assembly, homodimer. Binds to stalled ribosomes, contacting rRNA.

Its function is as follows. Endonuclease that is involved in the suppression of homologous recombination and thus may have a key role in the control of bacterial genetic diversity. Functionally, acts as a ribosome collision sensor, splitting the ribosome into its 2 subunits. Detects stalled/collided 70S ribosomes which it binds and splits by an ATP-hydrolysis driven conformational change. Acts upstream of the ribosome quality control system (RQC), a ribosome-associated complex that mediates the extraction of incompletely synthesized nascent chains from stalled ribosomes and their subsequent degradation. Probably generates substrates for RQC. The polypeptide is Endonuclease MutS2 (Staphylococcus haemolyticus (strain JCSC1435)).